The chain runs to 528 residues: Lanosterol 14-alpha demethylase (528 aa).

Residues 15 to 37 traverse the membrane as a helical segment; the sequence is LSLSVTQQISILLGVPFVYNLVW. Position 64 (tyrosine 64) interacts with oteseconazole. Tyrosine 118 lines the itraconazole pocket. Residue glycine 307 participates in posaconazole binding. An oteseconazole-binding site is contributed by histidine 377. Cysteine 470 is a heme binding site.

It belongs to the cytochrome P450 family. The cofactor is heme.

The protein resides in the endoplasmic reticulum membrane. The catalysed reaction is a 14alpha-methyl steroid + 3 reduced [NADPH--hemoprotein reductase] + 3 O2 = a Delta(14) steroid + formate + 3 oxidized [NADPH--hemoprotein reductase] + 4 H2O + 4 H(+). It catalyses the reaction a 14alpha-methyl steroid + reduced [NADPH--hemoprotein reductase] + O2 = a 14alpha-hydroxymethyl steroid + oxidized [NADPH--hemoprotein reductase] + H2O + H(+). The enzyme catalyses a 14alpha-hydroxymethyl steroid + reduced [NADPH--hemoprotein reductase] + O2 = a 14alpha-formyl steroid + oxidized [NADPH--hemoprotein reductase] + 2 H2O + H(+). It carries out the reaction a 14alpha-formyl steroid + reduced [NADPH--hemoprotein reductase] + O2 = a Delta(14) steroid + formate + oxidized [NADPH--hemoprotein reductase] + H2O + 2 H(+). The catalysed reaction is lanosterol + 3 reduced [NADPH--hemoprotein reductase] + 3 O2 = 4,4-dimethyl-5alpha-cholesta-8,14,24-trien-3beta-ol + formate + 3 oxidized [NADPH--hemoprotein reductase] + 4 H2O + 4 H(+). It catalyses the reaction lanosterol + reduced [NADPH--hemoprotein reductase] + O2 = 32-hydroxylanosterol + oxidized [NADPH--hemoprotein reductase] + H2O + H(+). The enzyme catalyses 32-hydroxylanosterol + reduced [NADPH--hemoprotein reductase] + O2 = 32-oxolanosterol + oxidized [NADPH--hemoprotein reductase] + 2 H2O + H(+). It carries out the reaction 32-oxolanosterol + reduced [NADPH--hemoprotein reductase] + O2 = 4,4-dimethyl-5alpha-cholesta-8,14,24-trien-3beta-ol + formate + oxidized [NADPH--hemoprotein reductase] + H2O + 2 H(+). The catalysed reaction is eburicol + 3 reduced [NADPH--hemoprotein reductase] + 3 O2 = 14-demethyleburicol + formate + 3 oxidized [NADPH--hemoprotein reductase] + 4 H2O + 4 H(+). It catalyses the reaction eburicol + reduced [NADPH--hemoprotein reductase] + O2 = 32-hydroxyeburicol + oxidized [NADPH--hemoprotein reductase] + H2O + H(+). The enzyme catalyses 32-hydroxyeburicol + reduced [NADPH--hemoprotein reductase] + O2 = 32-oxoeburicol + oxidized [NADPH--hemoprotein reductase] + 2 H2O + H(+). It carries out the reaction 32-oxoeburicol + reduced [NADPH--hemoprotein reductase] + O2 = 14-demethyleburicol + formate + oxidized [NADPH--hemoprotein reductase] + H2O + 2 H(+). The protein operates within steroid biosynthesis; zymosterol biosynthesis; zymosterol from lanosterol: step 1/6. The catalytic activity is inhibited by the binding of azoles clotrimazole, miconazole, fluconazole, ketoconazole, oteseconazole (VT-1161), tetraconazole, the triazole SCH39304, and the triazole derivative ICI 153066. Its function is as follows. Sterol 14alpha-demethylase that plays a critical role in the third module of ergosterol biosynthesis pathway, being ergosterol the major sterol component in fungal membranes that participates in a variety of functions. The third module or late pathway involves the ergosterol synthesis itself through consecutive reactions that mainly occur in the endoplasmic reticulum (ER) membrane. In filamentous fungi, during the initial step of this module, lanosterol (lanosta-8,24-dien-3beta-ol) can be metabolized to eburicol. Sterol 14alpha-demethylase catalyzes the three-step oxidative removal of the 14alpha-methyl group (C-32) of both these sterols in the form of formate, and converts eburicol and lanosterol to 14-demethyleburicol (4,4,24-trimethylergosta-8,14,24(28)-trienol) and 4,4-dimethyl-5alpha-cholesta-8,14,24-trien-3beta-ol, respectively, which are further metabolized by other enzymes in the pathway to ergosterol. Can also use substrates not intrinsic to fungi, such as 24,25-dihydrolanosterol (DHL), producing 4,4-dimethyl-8,14-cholestadien-3-beta-ol, but at lower rates than the endogenous substrates. In Candida albicans (strain SC5314 / ATCC MYA-2876) (Yeast), this protein is Lanosterol 14-alpha demethylase.